Here is a 207-residue protein sequence, read N- to C-terminus: Large ribosomal subunit protein uL4 (207 aa).

The disordered stretch occupies residues 49–78 (HAVKNRSAVSGGGRKPWRQKGTGRARQGSI).

Belongs to the universal ribosomal protein uL4 family. Part of the 50S ribosomal subunit.

Functionally, one of the primary rRNA binding proteins, this protein initially binds near the 5'-end of the 23S rRNA. It is important during the early stages of 50S assembly. It makes multiple contacts with different domains of the 23S rRNA in the assembled 50S subunit and ribosome. Forms part of the polypeptide exit tunnel. The polypeptide is Large ribosomal subunit protein uL4 (Streptococcus suis (strain 98HAH33)).